Here is a 337-residue protein sequence, read N- to C-terminus: Cobalt-precorrin-5B C(1)-methyltransferase (337 aa).

The protein belongs to the CbiD family.

The catalysed reaction is Co-precorrin-5B + S-adenosyl-L-methionine = Co-precorrin-6A + S-adenosyl-L-homocysteine. Its pathway is cofactor biosynthesis; adenosylcobalamin biosynthesis; cob(II)yrinate a,c-diamide from sirohydrochlorin (anaerobic route): step 6/10. Functionally, catalyzes the methylation of C-1 in cobalt-precorrin-5B to form cobalt-precorrin-6A. The chain is Cobalt-precorrin-5B C(1)-methyltransferase from Methanoculleus marisnigri (strain ATCC 35101 / DSM 1498 / JR1).